Here is a 461-residue protein sequence, read N- to C-terminus: Probable lipid II flippase MurJ (461 aa).

12 helical membrane-spanning segments follow: residues 5 to 25 (ILGA…PNLF), 51 to 71 (FASL…LLVA), 96 to 116 (IVAI…LGAL), 123 to 143 (FFAS…ALLI), 156 to 176 (LSYG…YPLV), 229 to 249 (IASF…VSYL), 258 to 278 (LPLA…IAIA), 293 to 313 (KAWF…IMLS), 337 to 357 (VFSL…FSLW), 372 to 392 (LISL…LGVL), 402 to 422 (GLFL…LGII), and 429 to 449 (LVIL…KSWV).

The protein belongs to the MurJ/MviN family.

The protein localises to the cell inner membrane. It participates in cell wall biogenesis; peptidoglycan biosynthesis. Functionally, involved in peptidoglycan biosynthesis. Transports lipid-linked peptidoglycan precursors from the inner to the outer leaflet of the cytoplasmic membrane. This chain is Probable lipid II flippase MurJ, found in Helicobacter pylori (strain ATCC 700392 / 26695) (Campylobacter pylori).